Here is a 174-residue protein sequence, read N- to C-terminus: MMNNNGFSTGEEDSRGPADQICCLLDDGERCRKQAGNASYSKRIQKTVTQRRLKLSIDSHARHIYICDFHKARIQCARTKRRRRDSEDDSNETDTDLPEVDLYQLQVNTLRRYKRFYKVSTRPSSNKAQLSETIMKHFKTIPIKEKEILTYFIYMVKSNSNKLDQKNNASAEAT.

The segment at 22-70 (CCLLDDGERCRKQAGNASYSKRIQKTVTQRRLKLSIDSHARHIYICDFH) adopts an Atypical zinc-finger fold.

This sequence belongs to the SAP30 family. Component of the class 1 Sin3-histone deacetylase complex (HDAC).

The protein resides in the nucleus. Its function is as follows. Required for the function of the class 1 Sin3-histone deacetylase complex (HDAC). The sequence is that of Histone deacetylase complex subunit SAP30 homolog from Anopheles gambiae (African malaria mosquito).